A 190-amino-acid chain; its full sequence is Peptidyl-tRNA hydrolase (190 aa).

A tRNA-binding site is contributed by phenylalanine 14. Histidine 19 functions as the Proton acceptor in the catalytic mechanism. TRNA contacts are provided by methionine 64, asparagine 66, and asparagine 112.

This sequence belongs to the PTH family. In terms of assembly, monomer.

It is found in the cytoplasm. It carries out the reaction an N-acyl-L-alpha-aminoacyl-tRNA + H2O = an N-acyl-L-amino acid + a tRNA + H(+). Its function is as follows. Hydrolyzes ribosome-free peptidyl-tRNAs (with 1 or more amino acids incorporated), which drop off the ribosome during protein synthesis, or as a result of ribosome stalling. Catalyzes the release of premature peptidyl moieties from peptidyl-tRNA molecules trapped in stalled 50S ribosomal subunits, and thus maintains levels of free tRNAs and 50S ribosomes. This chain is Peptidyl-tRNA hydrolase, found in Staphylococcus aureus (strain Mu3 / ATCC 700698).